We begin with the raw amino-acid sequence, 223 residues long: Ribosomal RNA small subunit methyltransferase G (223 aa).

Residues Gly83, Leu88, 134–135 (AE), and Arg152 each bind S-adenosyl-L-methionine.

This sequence belongs to the methyltransferase superfamily. RNA methyltransferase RsmG family.

It is found in the cytoplasm. In terms of biological role, specifically methylates the N7 position of guanine in position 518 of 16S rRNA. The chain is Ribosomal RNA small subunit methyltransferase G from Corynebacterium diphtheriae (strain ATCC 700971 / NCTC 13129 / Biotype gravis).